Consider the following 391-residue polypeptide: FLUCTUATING-LIGHT-ACCLIMATION protein 1, chloroplastic (391 aa).

The N-terminal 48 residues, 1-48 (MASSSTFLELTPFQWNQPLPYTQRPHHRTVLLYSKPQRRSNSIRLQIS), are a transit peptide targeting the chloroplast. The helical transmembrane segment at 87-107 (AIAAVLLGLLLFYDPNSALAA) threads the bilayer. Residues 116-138 (SFSSRSRSSSSSSSQSYSVPRTS) are compositionally biased toward low complexity. The disordered stretch occupies residues 116–140 (SFSSRSRSSSSSSSQSYSVPRTSNP). Helical transmembrane passes span 168–188 (FGFG…AFVL) and 321–341 (YIVV…PING).

The protein belongs to the FLAP family.

It is found in the plastid. It localises to the chloroplast thylakoid membrane. Its subcellular location is the chloroplast membrane. The protein resides in the chloroplast envelope. Functionally, monitors proton H(+) homeostasis in chloroplasts to manipulate luminal acidification levels appropriately to balance photoprotection and photochemical processes. Required during acclimation response to fluctuating light (e.g. photosynthetic activity optimization) by controlling non-photochemical quenching (NPQ); acts independently from DLDG1. This Arabidopsis thaliana (Mouse-ear cress) protein is FLUCTUATING-LIGHT-ACCLIMATION protein 1, chloroplastic.